A 335-amino-acid polypeptide reads, in one-letter code: tRNA N6-adenosine threonylcarbamoyltransferase (335 aa).

A divalent metal cation-binding residues include His109, His113, and Tyr130. Substrate-binding positions include Tyr130–Gly134, Asp162, Gly177, Glu181, and Asn266. Asp294 serves as a coordination point for a divalent metal cation.

It belongs to the KAE1 / TsaD family. In terms of assembly, component of the EKC/KEOPS complex composed of at least GON7, TP53RK, TPRKB, OSGEP and LAGE3; the whole complex dimerizes. A divalent metal cation serves as cofactor.

Its subcellular location is the cytoplasm. The protein localises to the nucleus. The enzyme catalyses L-threonylcarbamoyladenylate + adenosine(37) in tRNA = N(6)-L-threonylcarbamoyladenosine(37) in tRNA + AMP + H(+). Its function is as follows. Component of the EKC/KEOPS complex that is required for the formation of a threonylcarbamoyl group on adenosine at position 37 (t(6)A37) in tRNAs that read codons beginning with adenine. The complex is probably involved in the transfer of the threonylcarbamoyl moiety of threonylcarbamoyl-AMP (TC-AMP) to the N6 group of A37. OSGEP likely plays a direct catalytic role in this reaction, but requires other protein(s) of the complex to fulfill this activity. The protein is tRNA N6-adenosine threonylcarbamoyltransferase (Osgep) of Rattus norvegicus (Rat).